A 150-amino-acid polypeptide reads, in one-letter code: UPF0178 protein DMR_20710 (150 aa).

Belongs to the UPF0178 family.

The chain is UPF0178 protein DMR_20710 from Solidesulfovibrio magneticus (strain ATCC 700980 / DSM 13731 / RS-1) (Desulfovibrio magneticus).